The chain runs to 928 residues: MKSQFSWLVLSSTLACFTSCSTVFAATAENIGPSDSFDGSTNTGTYTPKNTTTGIDYTLTGDITLQNLGDSAALTKGCFSDTTESLSFAGKGYSLSFLNIKSSAEGAALSVTTDKNLSLTGFSSLTFLAAPSSVITTPSGKGAVKCGGDLTFDNNGTILFKQDYCEENGGAISTKNLSLKNSTGSISFEGNKSSATGKKGGAICATGTVDITNNTAPTLFSNNIAEAAGGAINSTGNCTITGNTSLVFSENSVTATAGNGGALSGDADVTISGNQSVTFSGNQAVANGGAIYAKKLTLASGGGGGISFSNNIVQGTTAGNGGAISILAAGECSLSAEAGDITFNGNAIVATTPQTTKRNSIDIGSTAKITNLRAISGHSIFFYDPITANTAADSTDTLNLNKADAGNSTDYSGSIVFSGEKLSEDEAKVADNLTSTLKQPVTLTAGNLVLKRGVTLDTKGFTQTAGSSVIMDAGTTLKASTEEVTLTGLSIPVDSLGEGKKVVIAASAASKNVALSGPILLLDNQGNAYENHDLGKTQDFSFVQLSALGTATTTDVPAVPTVATPTHYGYQGTWGMTWVDDTASTPKTKTATLAWTNTGYLPNPERQGPLVPNSLWGSFSDIQAIQGVIERSALTLCSDRGFWAAGVANFLDKDKKGEKRKYRHKSGGYAIGGAAQTCSENLISFAFCQLFGSDKDFLVAKNHTDTYAGAFYIQHITECSGFIGCLLDKLPGSWSHKPLVLEGQLAYSHVSNDLKTKYTAYPEVKGSWGNNAFNMMLGASSHSYPEYLHCFDTYAPYIKLNLTYIRQDSFSEKGTEGRSFDDSNLFNLSLPIGVKFEKFSDCNDFSYDLTLSYVPDLIRNDPKCTTALVISGASWETYANNLARQALQVRAGSHYAFSPMFEVLGQFVFEVRGSSRIYNVDLGGKFQF.

An N-terminal signal peptide occupies residues 1 to 25 (MKSQFSWLVLSSTLACFTSCSTVFA). Residues 635-928 (TLCSDRGFWA…NVDLGGKFQF (294 aa)) form the Autotransporter domain.

It belongs to the PMP outer membrane protein family.

The protein localises to the secreted. It is found in the cell wall. The protein resides in the cell outer membrane. In Chlamydia pneumoniae (Chlamydophila pneumoniae), this protein is Probable outer membrane protein pmp10 (pmp10).